The primary structure comprises 273 residues: Inositol monophosphatase 1 (273 aa).

Mg(2+) is bound by residues E71, D91, V93, and D94. E71 lines the substrate pocket. Residues 93 to 96 (VDGT), 194 to 196 (GSC), and D221 each bind substrate. D221 provides a ligand contact to Mg(2+).

The protein belongs to the inositol monophosphatase superfamily. The cofactor is Mg(2+). As to expression, expressed in seedlings, flowers, young and matures green fruits. Detected in roots and stems.

The enzyme catalyses a myo-inositol phosphate + H2O = myo-inositol + phosphate. It participates in polyol metabolism; myo-inositol biosynthesis; myo-inositol from D-glucose 6-phosphate: step 2/2. Its function is as follows. Responsible for the provision of inositol required for synthesis of phosphatidylinositol and polyphosphoinositides. The chain is Inositol monophosphatase 1 (IMP1) from Solanum lycopersicum (Tomato).